A 671-amino-acid chain; its full sequence is DNA ligase (671 aa).

Residues 32–36, 81–82, and E113 contribute to the NAD(+) site; these read DAEYD and SL. K115 acts as the N6-AMP-lysine intermediate in catalysis. NAD(+)-binding residues include R136, E173, K290, and K314. Residues C408, C411, C426, and C432 each contribute to the Zn(2+) site. The BRCT domain maps to 593-671; the sequence is EIDSPFAGKT…EAEMIRLLGA (79 aa).

Belongs to the NAD-dependent DNA ligase family. LigA subfamily. Mg(2+) serves as cofactor. Mn(2+) is required as a cofactor.

It catalyses the reaction NAD(+) + (deoxyribonucleotide)n-3'-hydroxyl + 5'-phospho-(deoxyribonucleotide)m = (deoxyribonucleotide)n+m + AMP + beta-nicotinamide D-nucleotide.. DNA ligase that catalyzes the formation of phosphodiester linkages between 5'-phosphoryl and 3'-hydroxyl groups in double-stranded DNA using NAD as a coenzyme and as the energy source for the reaction. It is essential for DNA replication and repair of damaged DNA. In Salmonella choleraesuis (strain SC-B67), this protein is DNA ligase.